We begin with the raw amino-acid sequence, 454 residues long: Glutamyl-tRNA reductase (454 aa).

Substrate contacts are provided by residues 49 to 52 (TCNR), serine 109, 114 to 116 (ETQ), and glutamine 120. Catalysis depends on cysteine 50, which acts as the Nucleophile. Position 189-194 (189-194 (GAGKMS)) interacts with NADP(+). A compositionally biased stretch (basic and acidic residues) spans 432–442 (DHAEQSWKEGQ). The interval 432–454 (DHAEQSWKEGQRPSLNQGMALRT) is disordered.

It belongs to the glutamyl-tRNA reductase family. In terms of assembly, homodimer.

The catalysed reaction is (S)-4-amino-5-oxopentanoate + tRNA(Glu) + NADP(+) = L-glutamyl-tRNA(Glu) + NADPH + H(+). It participates in porphyrin-containing compound metabolism; protoporphyrin-IX biosynthesis; 5-aminolevulinate from L-glutamyl-tRNA(Glu): step 1/2. Catalyzes the NADPH-dependent reduction of glutamyl-tRNA(Glu) to glutamate 1-semialdehyde (GSA). The polypeptide is Glutamyl-tRNA reductase (Shouchella clausii (strain KSM-K16) (Alkalihalobacillus clausii)).